Consider the following 608-residue polypeptide: CTP synthase (608 aa).

The amidoligase domain stretch occupies residues 1-271; the sequence is MGQAHITKHI…DAYVVRRLGL (271 aa). S18 serves as a coordination point for CTP. Residue S18 coordinates UTP. ATP is bound by residues 19-24 and D76; that span reads SLGKGL. Residues D76 and E145 each contribute to the Mg(2+) site. Residues 152 to 154, 192 to 197, and K228 contribute to the CTP site; these read DIE and KTKPTQ. UTP is bound by residues 192–197 and K228; that span reads KTKPTQ. Residues 296-545 enclose the Glutamine amidotransferase type-1 domain; it reads TIAIVGKYVD…VAAAVAHADR (250 aa). G359 serves as a coordination point for L-glutamine. The active-site Nucleophile; for glutamine hydrolysis is the C386. L-glutamine-binding positions include 387–390, E410, and R471; that span reads LGLQ. Catalysis depends on residues H518 and E520. The disordered stretch occupies residues 550–608; that stretch reads LPVDLPSEDAPTPENGVPENGAAQTRGVTAGRSGGSIRRGASASRPSVSSNGTAALVSP. Over residues 584–594 the composition is skewed to low complexity; the sequence is GSIRRGASASR.

Belongs to the CTP synthase family. As to quaternary structure, homotetramer.

The enzyme catalyses UTP + L-glutamine + ATP + H2O = CTP + L-glutamate + ADP + phosphate + 2 H(+). It carries out the reaction L-glutamine + H2O = L-glutamate + NH4(+). The catalysed reaction is UTP + NH4(+) + ATP = CTP + ADP + phosphate + 2 H(+). The protein operates within pyrimidine metabolism; CTP biosynthesis via de novo pathway; CTP from UDP: step 2/2. With respect to regulation, allosterically activated by GTP, when glutamine is the substrate; GTP has no effect on the reaction when ammonia is the substrate. The allosteric effector GTP functions by stabilizing the protein conformation that binds the tetrahedral intermediate(s) formed during glutamine hydrolysis. Inhibited by the product CTP, via allosteric rather than competitive inhibition. In terms of biological role, catalyzes the ATP-dependent amination of UTP to CTP with either L-glutamine or ammonia as the source of nitrogen. Regulates intracellular CTP levels through interactions with the four ribonucleotide triphosphates. The chain is CTP synthase from Frankia casuarinae (strain DSM 45818 / CECT 9043 / HFP020203 / CcI3).